Here is a 445-residue protein sequence, read N- to C-terminus: 3-phosphoshikimate 1-carboxyvinyltransferase (445 aa).

Positions 21, 22, and 26 each coordinate 3-phosphoshikimate. Position 21 (lysine 21) interacts with phosphoenolpyruvate. Residues glycine 92 and arginine 120 each contribute to the phosphoenolpyruvate site. Serine 165, glutamine 166, aspartate 307, and lysine 334 together coordinate 3-phosphoshikimate. A phosphoenolpyruvate-binding site is contributed by glutamine 166. The Proton acceptor role is filled by aspartate 307. The phosphoenolpyruvate site is built by arginine 338, arginine 379, and lysine 405.

Belongs to the EPSP synthase family. In terms of assembly, monomer.

It localises to the cytoplasm. The catalysed reaction is 3-phosphoshikimate + phosphoenolpyruvate = 5-O-(1-carboxyvinyl)-3-phosphoshikimate + phosphate. It functions in the pathway metabolic intermediate biosynthesis; chorismate biosynthesis; chorismate from D-erythrose 4-phosphate and phosphoenolpyruvate: step 6/7. Functionally, catalyzes the transfer of the enolpyruvyl moiety of phosphoenolpyruvate (PEP) to the 5-hydroxyl of shikimate-3-phosphate (S3P) to produce enolpyruvyl shikimate-3-phosphate and inorganic phosphate. The sequence is that of 3-phosphoshikimate 1-carboxyvinyltransferase from Chlamydia pneumoniae (Chlamydophila pneumoniae).